The primary structure comprises 319 residues: HPr kinase/phosphorylase (319 aa).

Active-site residues include His144 and Lys165. 159 to 166 serves as a coordination point for ATP; that stretch reads GKSGIGKS. Residue Ser166 participates in Mg(2+) binding. Catalysis depends on Asp183, which acts as the Proton acceptor; for phosphorylation activity. Proton donor; for dephosphorylation activity. The important for the catalytic mechanism of both phosphorylation and dephosphorylation stretch occupies residues 207-216; sequence MEIRGLGVIN. Residue Glu208 coordinates Mg(2+). Arg249 is a catalytic residue. An important for the catalytic mechanism of dephosphorylation region spans residues 270–275; it reads PVRPGR.

It belongs to the HPrK/P family. Homohexamer. Requires Mg(2+) as cofactor.

The catalysed reaction is [HPr protein]-L-serine + ATP = [HPr protein]-O-phospho-L-serine + ADP + H(+). The enzyme catalyses [HPr protein]-O-phospho-L-serine + phosphate + H(+) = [HPr protein]-L-serine + diphosphate. Its function is as follows. Catalyzes the ATP- as well as the pyrophosphate-dependent phosphorylation of a specific serine residue in HPr, a phosphocarrier protein of the phosphoenolpyruvate-dependent sugar phosphotransferase system (PTS). HprK/P also catalyzes the pyrophosphate-producing, inorganic phosphate-dependent dephosphorylation (phosphorolysis) of seryl-phosphorylated HPr (P-Ser-HPr). The sequence is that of HPr kinase/phosphorylase from Geobacter sulfurreducens (strain ATCC 51573 / DSM 12127 / PCA).